The following is a 247-amino-acid chain: Cell division protein ZapD (247 aa).

It belongs to the ZapD family. In terms of assembly, interacts with FtsZ.

It localises to the cytoplasm. In terms of biological role, cell division factor that enhances FtsZ-ring assembly. Directly interacts with FtsZ and promotes bundling of FtsZ protofilaments, with a reduction in FtsZ GTPase activity. The polypeptide is Cell division protein ZapD (Escherichia coli O17:K52:H18 (strain UMN026 / ExPEC)).